Consider the following 278-residue polypeptide: 4-deoxy-L-threo-5-hexosulose-uronate ketol-isomerase (278 aa).

Residues His-196, His-198, Glu-203, and His-245 each coordinate Zn(2+).

Belongs to the KduI family. Zn(2+) is required as a cofactor.

The catalysed reaction is 5-dehydro-4-deoxy-D-glucuronate = 3-deoxy-D-glycero-2,5-hexodiulosonate. The protein operates within glycan metabolism; pectin degradation; 2-dehydro-3-deoxy-D-gluconate from pectin: step 4/5. Functionally, catalyzes the isomerization of 5-dehydro-4-deoxy-D-glucuronate to 3-deoxy-D-glycero-2,5-hexodiulosonate. This Shigella sonnei (strain Ss046) protein is 4-deoxy-L-threo-5-hexosulose-uronate ketol-isomerase.